Consider the following 380-residue polypeptide: Ubiquitin-like protein 7 (380 aa).

Positions 18 to 98 constitute a Ubiquitin-like domain; that stretch reads APKSILQLPE…VLRKSWPEPD (81 aa). Positions 200 to 313 are disordered; it reads TPMPGADSSS…SSGVQSGTPI (114 aa). Over residues 206–221 the composition is skewed to low complexity; that stretch reads DSSSRSMPSSSYRDMP. At serine 230 the chain carries Phosphoserine. Low complexity-rich tracts occupy residues 239-253 and 270-293; these read STRS…SSRP and SELA…TPGT. Residues 294-313 are compositionally biased toward polar residues; it reads QGHSSGTSPMSSGVQSGTPI. Residues 333–377 form the UBA domain; the sequence is SLQIQWQPQLQQLRDMGIQDDELSLRALQATGGDIQAALELIFAG.

In terms of assembly, binds ubiquitin. Interacts with MAVS; this interaction enhances TRIM21-dependent 'Lys-27'-linked polyubiquitination of MAVS. Deubiquitinated by OTUD4 which stabilizes UBL7 expression.

Functionally, interferon-stimulated protein that positively regulates RNA virus-triggered innate immune signaling. Mechanistically, promotes 'Lys-27'-linked polyubiquitination of MAVS through TRIM21 leading to enhanced the IFN signaling pathway. The sequence is that of Ubiquitin-like protein 7 (Ubl7) from Mus musculus (Mouse).